The sequence spans 659 residues: Biosynthetic arginine decarboxylase (659 aa).

N6-(pyridoxal phosphate)lysine is present on Lys128. 308 to 318 is a substrate binding site; the sequence is FDVGGGLGVDY.

The protein belongs to the Orn/Lys/Arg decarboxylase class-II family. SpeA subfamily. Mg(2+) serves as cofactor. Requires pyridoxal 5'-phosphate as cofactor.

It carries out the reaction L-arginine + H(+) = agmatine + CO2. The protein operates within amine and polyamine biosynthesis; agmatine biosynthesis; agmatine from L-arginine: step 1/1. Its function is as follows. Catalyzes the biosynthesis of agmatine from arginine. The polypeptide is Biosynthetic arginine decarboxylase (Yersinia pestis).